The following is a 422-amino-acid chain: MSTIGAVDILNQKTITSEVAASVTSKYLQSTFSKGNTSHIEDKRFIHVSSRSHSRFTSTPITPNEILSLKFHVSGSSMAYSRMDGSLTVWFIKDASFDKSVEVYIPDCCGSDKLATDLSWNPTSLNQIAVVSNSSEISLLLINEKSLTASKLRTLSLGSKTKVNTCLYDPLGNWLLAATKSEKIYLFDVKKDHSSVCSLNISDISQEDNDVVYSLAWSNGGSHIFIGFKSGYLAILKAKHGILEVCTKIKAHTGPITEIKMDPWGRNFITGSIDGNCYVWNMKSLCCELIINDLNSAVTTLDVCHLGKILGICTEDEMVYFYDLNSGNLLHSKSLANYKTDPVLKFYPDKSWYIMSGKNDTLSNHFVKNEKNLITYWKDMFDNTMIEKRRKNNGGGNNHNKRTSKNTDRIGKDRPSRFNSKK.

5 WD repeats span residues 61–100 (ITPNEILSLKFHVSGSSMAYSRMDGSLTVWFIKDASFDKS), 158–197 (GSKTKVNTCLYDPLGNWLLAATKSEKIYLFDVKKDHSSVC), 207–246 (EDNDVVYSLAWSNGGSHIFIGFKSGYLAILKAKHGILEVC), 251–290 (AHTGPITEIKMDPWGRNFITGSIDGNCYVWNMKSLCCELI), and 293–332 (DLNSAVTTLDVCHLGKILGICTEDEMVYFYDLNSGNLLHS). A disordered region spans residues 388–422 (KRRKNNGGGNNHNKRTSKNTDRIGKDRPSRFNSKK). Residues 405–416 (KNTDRIGKDRPS) show a composition bias toward basic and acidic residues.

The protein belongs to the THOC3 family. Component of the transcription/export (TREX) complex and the THO complex.

It is found in the nucleus. Functionally, component of the TREX complex, which operates in coupling transcription elongation to mRNA export. The sequence is that of Protein TEX1 (TEX1) from Saccharomyces cerevisiae (strain ATCC 204508 / S288c) (Baker's yeast).